Reading from the N-terminus, the 183-residue chain is MEQRLAEFRAARKRAGLAAQPPAASQGAQTPGEKAEAAATLKAAPGWLKRFLVWKPRPASARAQPGLVQEAAQPQGSTSETPWNTAIPLPSCWDQSFLTNITFLKVLLWLVLLGLFVELEFGLAYFVLSLFYWMYVGTRGPEEKKEGEKSAYSVFNPGCEAIQGTLTAEQLERELQLRPLAGR.

Residues 1-105 lie on the Cytoplasmic side of the membrane; the sequence is MEQRLAEFRA…SFLTNITFLK (105 aa). A disordered region spans residues 11–36; that stretch reads ARKRAGLAAQPPAASQGAQTPGEKAE. The span at 16–36 shows a compositional bias: low complexity; sequence GLAAQPPAASQGAQTPGEKAE. The segment at 91 to 105 is middle helical (MH); it reads SCWDQSFLTNITFLK. Positions 106-126 form an intramembrane region, helical; the sequence is VLLWLVLLGLFVELEFGLAYF. The Cytoplasmic segment spans residues 127–183; that stretch reads VLSLFYWMYVGTRGPEEKKEGEKSAYSVFNPGCEAIQGTLTAEQLERELQLRPLAGR.

Belongs to the SAYSD1 family. As to quaternary structure, associates (via N-terminus) with ribosomes.

The protein localises to the endoplasmic reticulum membrane. Its subcellular location is the cytoplasmic vesicle membrane. Functionally, ufmylation 'reader' component of a translocation-associated quality control pathway, a mechanism that takes place when a ribosome has stalled during translation, and which is required to degrade clogged substrates. Specifically recognizes and binds ufmylated ribosomes when a ribosome has stalled, promoting the transport of stalled nascent chain via the TRAPP complex to lysosomes for degradation. This Homo sapiens (Human) protein is SAYSvFN domain-containing protein 1.